The following is a 1139-amino-acid chain: Liprin-alpha (1139 aa).

4 coiled-coil regions span residues 30-144, 172-298, 329-517, and 655-701; these read PSDR…SLRM, EHHK…KNQI, IRDL…AQFQ, and QDAQ…EFYD. Disordered regions lie at residues 700–720 and 764–847; these read YDDQ…LDNM and NQFD…DRRK. 2 stretches are compositionally biased toward polar residues: residues 704 to 719 and 778 to 787; these read GIST…QLDN and PASSVASSTD. 3 consecutive SAM domains span residues 867-933, 952-1016, and 1040-1109; these read WNGP…MVSL, NHEY…LKKV, and WSNE…LVND.

Belongs to the liprin family. Liprin-alpha subfamily. In terms of tissue distribution, detected in vulval muscle and other cells near the vulva; in neurons located in the lateral ganglion, posterior ganglion, ventral cord and lateral body; and in pharyngeal and body wall muscle cells.

Its subcellular location is the synapse. May play a role in regulating the structure of the neuronal region, called the active zone, from which synaptic vesicles send neurotransmitter signals across the synapse. This may be in association with the liprin-beta protein hlb-1. This Caenorhabditis elegans protein is Liprin-alpha.